A 274-amino-acid polypeptide reads, in one-letter code: Penicillin-insensitive murein endopeptidase (274 aa).

Residues M1 to A19 form the signal peptide. 3 disulfide bridges follow: C44-C265, C187-C235, and C216-C223. 6 residues coordinate Zn(2+): H110, H113, D120, D147, H150, and H211.

It belongs to the peptidase M74 family. In terms of assembly, dimer. Requires Zn(2+) as cofactor.

It is found in the periplasm. Murein endopeptidase that cleaves the D-alanyl-meso-2,6-diamino-pimelyl amide bond that connects peptidoglycan strands. Likely plays a role in the removal of murein from the sacculus. The polypeptide is Penicillin-insensitive murein endopeptidase (Shigella sonnei (strain Ss046)).